The chain runs to 149 residues: UPF0179 protein rrnAC1064 (149 aa).

This sequence belongs to the UPF0179 family.

This chain is UPF0179 protein rrnAC1064, found in Haloarcula marismortui (strain ATCC 43049 / DSM 3752 / JCM 8966 / VKM B-1809) (Halobacterium marismortui).